Consider the following 299-residue polypeptide: Bifunctional protein FolD (299 aa).

NADP(+)-binding positions include 168-170 (GRS), S193, and I234.

The protein belongs to the tetrahydrofolate dehydrogenase/cyclohydrolase family. In terms of assembly, homodimer.

It carries out the reaction (6R)-5,10-methylene-5,6,7,8-tetrahydrofolate + NADP(+) = (6R)-5,10-methenyltetrahydrofolate + NADPH. It catalyses the reaction (6R)-5,10-methenyltetrahydrofolate + H2O = (6R)-10-formyltetrahydrofolate + H(+). It functions in the pathway one-carbon metabolism; tetrahydrofolate interconversion. Catalyzes the oxidation of 5,10-methylenetetrahydrofolate to 5,10-methenyltetrahydrofolate and then the hydrolysis of 5,10-methenyltetrahydrofolate to 10-formyltetrahydrofolate. This is Bifunctional protein FolD from Agrobacterium fabrum (strain C58 / ATCC 33970) (Agrobacterium tumefaciens (strain C58)).